Reading from the N-terminus, the 1407-residue chain is ABC transporter B family member 6 (1407 aa).

Residues 18–65 are disordered; that stretch reads LTPVSEVSEPPESPSPYLDPGAEHGGTGTAAQADDEEEMEEPEEMEPP. Residues 50-63 are compositionally biased toward acidic residues; that stretch reads ADDEEEMEEPEEME. 4 helical membrane-spanning segments follow: residues 84 to 104, 139 to 159, 212 to 231, and 236 to 258; these read VLMVFGSVAAAAHGTALIVYL, IVYIAGGVFISGWIEVSCWIL, VGNYIHNMATFISGLIIGFV, and IALITLATGPFIVAAGGISNIFL. An ABC transmembrane type-1 1 domain is found at 86-379; that stretch reads MVFGSVAAAA…AATNFYSFDQ (294 aa). N-linked (GlcNAc...) asparagine glycosylation is present at N291. 2 consecutive transmembrane segments (helical) span residues 310–330 and 351–371; these read GILISLVQGLGLGFTYGLAIC and GEIITALFAVILSGLGLNQAA. Positions 412 to 647 constitute an ABC transporter 1 domain; sequence IEFRNVYFSY…GNLYAELLKC (236 aa). 447–454 serves as a coordination point for ATP; the sequence is GRNGSGKS. N-linked (GlcNAc...) asparagine glycans are attached at residues N449 and N663. 2 disordered regions span residues 670 to 696 and 709 to 815; these read AERDSSAGRGFQEPSSPKMAKSPSLQR and NSEE…DGQH. N727 carries N-linked (GlcNAc...) asparagine glycosylation. Positions 733-755 are enriched in basic and acidic residues; sequence VGEKEPTIKRQDSFEMRLPELPK. A compositionally biased stretch (polar residues) spans 761–770; that stretch reads PQRQKSNGSD. N767 is a glycosylation site (N-linked (GlcNAc...) asparagine). Positions 835–1123 constitute an ABC transmembrane type-1 2 domain; sequence AVLGSIGAAI…PFGLAPYILK (289 aa). 6 helical membrane-spanning segments follow: residues 840–860, 880–900, 958–978, 982–1002, 1061–1081, and 1102–1122; these read IGAAIFGSFNPLLAYVIALVV, LIIACMGIVTVVANFLQHFYF, IFIQDSFAVIVAILIGLLLGW, LVALATLPVLTLSAIAQKLWL, IGFAFGFSQFLLFACNALLLW, and MVFSFATFALVEPFGLAPYIL. An ABC transporter 2 domain is found at 1158-1395; it reads IELKNIDFCY…NGLYVRLMQP (238 aa). N1178 carries N-linked (GlcNAc...) asparagine glycosylation. 1193 to 1200 is an ATP binding site; the sequence is GVSGSGKS. N1260 and N1346 each carry an N-linked (GlcNAc...) asparagine glycan.

Belongs to the ABC transporter superfamily. ABCB family. Multidrug resistance exporter (TC 3.A.1.201) subfamily. Expressed in aerial tissues.

It localises to the membrane. The enzyme catalyses (indol-3-yl)acetate(in) + ATP + H2O = (indol-3-yl)acetate(out) + ADP + phosphate + H(+). Probable auxin efflux transporter that contributes, together with ABCB20 and in a FKBP42/TWD1-dependent manner, to the regulation of leaf position and morphology, internode distribution, roots development, and inflorescence organization, probably by modulating auxin repartition. In Arabidopsis thaliana (Mouse-ear cress), this protein is ABC transporter B family member 6.